The chain runs to 135 residues: Ribosome-binding factor A (135 aa).

This sequence belongs to the RbfA family. Monomer. Binds 30S ribosomal subunits, but not 50S ribosomal subunits or 70S ribosomes.

The protein localises to the cytoplasm. Its function is as follows. One of several proteins that assist in the late maturation steps of the functional core of the 30S ribosomal subunit. Associates with free 30S ribosomal subunits (but not with 30S subunits that are part of 70S ribosomes or polysomes). Required for efficient processing of 16S rRNA. May interact with the 5'-terminal helix region of 16S rRNA. In Aliivibrio fischeri (strain ATCC 700601 / ES114) (Vibrio fischeri), this protein is Ribosome-binding factor A.